The primary structure comprises 709 residues: Elongation factor G (709 aa).

The tr-type G domain occupies N10–L286. Residues A19–T26, D83–H87, and N137–D140 each bind GTP.

The protein belongs to the TRAFAC class translation factor GTPase superfamily. Classic translation factor GTPase family. EF-G/EF-2 subfamily.

It localises to the cytoplasm. Its function is as follows. Catalyzes the GTP-dependent ribosomal translocation step during translation elongation. During this step, the ribosome changes from the pre-translocational (PRE) to the post-translocational (POST) state as the newly formed A-site-bound peptidyl-tRNA and P-site-bound deacylated tRNA move to the P and E sites, respectively. Catalyzes the coordinated movement of the two tRNA molecules, the mRNA and conformational changes in the ribosome. The sequence is that of Elongation factor G from Corynebacterium glutamicum (strain R).